Reading from the N-terminus, the 430-residue chain is Aspartate aminotransferase, mitochondrial (430 aa).

A mitochondrion-targeting transit peptide spans Met-1 to Ser-28. Residues Gly-65, Trp-160, and Asn-213 each contribute to the L-aspartate site. Lys-277 carries the N6-(pyridoxal phosphate)lysine modification. L-aspartate is bound at residue Arg-405.

Belongs to the class-I pyridoxal-phosphate-dependent aminotransferase family. In terms of assembly, homodimer. Requires pyridoxal 5'-phosphate as cofactor.

It is found in the mitochondrion matrix. It catalyses the reaction L-aspartate + 2-oxoglutarate = oxaloacetate + L-glutamate. Amino acid aminotransferase important for the metabolism of amino acids and Krebs-cycle related organic acids. No activity with D-Asp or D-Ala as amino donors. In plants, it is involved in nitrogen metabolism and in aspects of carbon and energy metabolism. This Arabidopsis thaliana (Mouse-ear cress) protein is Aspartate aminotransferase, mitochondrial (ASP1).